A 214-amino-acid chain; its full sequence is Thymidylate kinase (214 aa).

10–17 (GPDGAGKT) contributes to the ATP binding site.

It belongs to the thymidylate kinase family.

The enzyme catalyses dTMP + ATP = dTDP + ADP. In terms of biological role, phosphorylation of dTMP to form dTDP in both de novo and salvage pathways of dTTP synthesis. The protein is Thymidylate kinase of Limosilactobacillus fermentum (strain NBRC 3956 / LMG 18251) (Lactobacillus fermentum).